A 333-amino-acid chain; its full sequence is Fructose-1,6-bisphosphatase class 1 (333 aa).

Mg(2+) is bound by residues Glu-92, Asp-113, Leu-115, and Asp-116. Substrate is bound by residues 116–119 (DGSS), Asn-209, Tyr-242, and Lys-272. A Mg(2+)-binding site is contributed by Glu-278.

The protein belongs to the FBPase class 1 family. Homotetramer. Mg(2+) is required as a cofactor.

The protein resides in the cytoplasm. It carries out the reaction beta-D-fructose 1,6-bisphosphate + H2O = beta-D-fructose 6-phosphate + phosphate. Its pathway is carbohydrate biosynthesis; Calvin cycle. This is Fructose-1,6-bisphosphatase class 1 from Chlorobium phaeovibrioides (strain DSM 265 / 1930) (Prosthecochloris vibrioformis (strain DSM 265)).